The primary structure comprises 391 residues: Ribonuclease 3-like protein 2 (391 aa).

The Nuclear export signal signature appears at 7 to 26 (PEYNFPAITRCSLSNSLPHR). The RNase III domain occupies 60–203 (MEAVEKILNY…LAGAVYVDVN (144 aa)). Residues E96, D189, and E192 each coordinate Mg(2+). DRBM domains lie at 218-294 (EPIV…KLSE) and 313-387 (HAKT…ALRK). Residues C240 and C322 are joined by a disulfide bond. The Bipartite nuclear localization motif lies at 371–387 (KKAESSSAYHMIRALRK).

As to quaternary structure, homodimer; disulfide-linked. Requires Mg(2+) as cofactor. It depends on Mn(2+) as a cofactor. In terms of tissue distribution, expressed in seeds, leaves and flower buds.

It is found in the nucleus. It localises to the cytoplasm. In terms of biological role, ribonuclease that cleaves double-stranded RNA (dsRNA). Required for 3'-external transcribed spacer (ETS) cleavage of the pre-rRNA precursors. May promote the production of 21 nucleotide small interfering RNA (siRNA) during post-transcriptional gene silencing (PTGS). This Arabidopsis thaliana (Mouse-ear cress) protein is Ribonuclease 3-like protein 2 (RTL2).